The sequence spans 294 residues: Glycine--tRNA ligase alpha subunit (294 aa).

It belongs to the class-II aminoacyl-tRNA synthetase family. In terms of assembly, tetramer of two alpha and two beta subunits.

The protein localises to the cytoplasm. The enzyme catalyses tRNA(Gly) + glycine + ATP = glycyl-tRNA(Gly) + AMP + diphosphate. The sequence is that of Glycine--tRNA ligase alpha subunit from Trichodesmium erythraeum (strain IMS101).